Reading from the N-terminus, the 151-residue chain is Cathelicidin-3 (151 aa).

The N-terminal stretch at 1-17 (MLSCWVLLLALLGGACA) is a signal peptide. A propeptide spanning residues 18–122 (LPAPLGYSQA…TCVDSMADPV (105 aa)) is cleaved from the precursor. Disulfide bonds link Cys75–Cys86 and Cys97–Cys114. The chain crosses the membrane as a helical span at residues 128–148 (WPLVPVAINTVAAGINLYKAI).

The protein belongs to the cathelicidin family. In terms of tissue distribution, detected in bone marrow, liver and lung.

It localises to the secreted. The protein localises to the membrane. May bind bacterial lipopolysaccharide (LPS). May have antimicrobial activity and play a role in the innate immune response. In Gallus gallus (Chicken), this protein is Cathelicidin-3 (CATHL3).